The primary structure comprises 331 residues: tRNA-dihydrouridine(20/20a) synthase (331 aa).

FMN contacts are provided by residues 18-20 and Gln70; that span reads PML. The active-site Proton donor is Cys100. FMN is bound by residues Lys139, His172, 212–214, and 234–235; these read NGG and GR.

This sequence belongs to the Dus family. DusA subfamily. FMN is required as a cofactor.

The enzyme catalyses 5,6-dihydrouridine(20) in tRNA + NADP(+) = uridine(20) in tRNA + NADPH + H(+). The catalysed reaction is 5,6-dihydrouridine(20) in tRNA + NAD(+) = uridine(20) in tRNA + NADH + H(+). It carries out the reaction 5,6-dihydrouridine(20a) in tRNA + NADP(+) = uridine(20a) in tRNA + NADPH + H(+). It catalyses the reaction 5,6-dihydrouridine(20a) in tRNA + NAD(+) = uridine(20a) in tRNA + NADH + H(+). Functionally, catalyzes the synthesis of 5,6-dihydrouridine (D), a modified base found in the D-loop of most tRNAs, via the reduction of the C5-C6 double bond in target uridines. Specifically modifies U20 and U20a in tRNAs. The chain is tRNA-dihydrouridine(20/20a) synthase from Escherichia coli O6:H1 (strain CFT073 / ATCC 700928 / UPEC).